A 46-amino-acid chain; its full sequence is Bottromycin D (46 aa).

Positions 10 to 46 (MTADFLNDDPNNAELSSLEMEELESWGAWSDDTDQSV) are excised as a propeptide.

In terms of processing, the precursor peptide is first ribosomally synthesized and then highly tailored by specific enzymes to yield the final natural product. These modifications include several methylations, cyclization and the formation of t-Leu and Thia-beta-Ala residues.

The protein localises to the secreted. Its function is as follows. Bottromycin D is a ribosomally synthesized and post-translationally modified peptide (RiPP) that displays antibiotic activity against methicillin-resistant S.aureus (MRSA). The sequence is that of Bottromycin D from Streptomyces sp.